The sequence spans 370 residues: Putative agmatine deiminase (370 aa).

The Amidino-cysteine intermediate role is filled by Cys361.

This sequence belongs to the agmatine deiminase family.

It catalyses the reaction agmatine + H2O = N-carbamoylputrescine + NH4(+). The sequence is that of Putative agmatine deiminase from Shewanella sp. (strain MR-7).